A 466-amino-acid chain; its full sequence is D-inositol 3-phosphate glycosyltransferase (466 aa).

Residues 1-12 (MRPMRAGAGAAG) are compositionally biased toward low complexity. Positions 1–22 (MRPMRAGAGAAGESCKDDGVRP) are disordered. A 1D-myo-inositol 3-phosphate-binding site is contributed by His43. UDP-N-acetyl-alpha-D-glucosamine contacts are provided by residues 49 to 50 (QP) and Gly57. Residues 54–59 (DAGGMN), Lys112, Tyr145, Thr169, and Arg189 each bind 1D-myo-inositol 3-phosphate. The UDP-N-acetyl-alpha-D-glucosamine site is built by Arg263, Lys268, and Gln321. Mg(2+) is bound by residues Phe330, His331, and Val333. Residues Glu343 and Glu351 each contribute to the UDP-N-acetyl-alpha-D-glucosamine site. Thr357 serves as a coordination point for Mg(2+). The tract at residues 446–466 (VRDPVAARKPRRWTARRGVGA) is disordered.

The protein belongs to the glycosyltransferase group 1 family. MshA subfamily. Homodimer.

The enzyme catalyses 1D-myo-inositol 3-phosphate + UDP-N-acetyl-alpha-D-glucosamine = 1D-myo-inositol 2-acetamido-2-deoxy-alpha-D-glucopyranoside 3-phosphate + UDP + H(+). Catalyzes the transfer of a N-acetyl-glucosamine moiety to 1D-myo-inositol 3-phosphate to produce 1D-myo-inositol 2-acetamido-2-deoxy-glucopyranoside 3-phosphate in the mycothiol biosynthesis pathway. The polypeptide is D-inositol 3-phosphate glycosyltransferase (Mycobacterium marinum (strain ATCC BAA-535 / M)).